We begin with the raw amino-acid sequence, 363 residues long: tRNA dimethylallyltransferase (363 aa).

The interval 1–55 is unknown insert; that stretch reads MLACNDDTSLYLLVKQVTKKEIYSNDLENGNVKRGASMQSLYLIGDPKCCRNNSS. 65–72 contributes to the ATP binding site; it reads GPTASGKS. 67–72 is a binding site for substrate; it reads TASGKS. Interaction with substrate tRNA stretches follow at residues 90 to 93 and 214 to 218; these read DSMQ and QRLIR.

This sequence belongs to the IPP transferase family. As to quaternary structure, monomer. The cofactor is Mg(2+).

It carries out the reaction adenosine(37) in tRNA + dimethylallyl diphosphate = N(6)-dimethylallyladenosine(37) in tRNA + diphosphate. In terms of biological role, catalyzes the transfer of a dimethylallyl group onto the adenine at position 37 in tRNAs that read codons beginning with uridine, leading to the formation of N6-(dimethylallyl)adenosine (i(6)A). This chain is tRNA dimethylallyltransferase, found in Rickettsia conorii (strain ATCC VR-613 / Malish 7).